Here is a 59-residue protein sequence, read N- to C-terminus: Alpha-like toxin CsEv5 (59 aa).

Residues 1-59 (KDGYPVDSKGCKLSCVANNYCDNQCKMKKASGGHCYAMSCYCEGLPENAKVSDSATNIC) enclose the LCN-type CS-alpha/beta domain. 4 cysteine pairs are disulfide-bonded: cysteine 11/cysteine 59, cysteine 15/cysteine 35, cysteine 21/cysteine 40, and cysteine 25/cysteine 42.

Belongs to the long (4 C-C) scorpion toxin superfamily. Sodium channel inhibitor family. In terms of tissue distribution, expressed by the venom gland.

It is found in the secreted. Functionally, binds voltage-independently sodium channels (Nav) and inhibits the inactivation of the activated channels, thereby blocking neuronal transmission. Is highly toxic to insects and barely toxic to mammals. As it does not compete with the classical alpha-toxin AaH2, this toxin is considered as an alpha-like toxin. This Centruroides sculpturatus (Arizona bark scorpion) protein is Alpha-like toxin CsEv5.